The sequence spans 105 residues: Serine protease inhibitor Kazal-type 8 (105 aa).

The first 21 residues, 1–21 (MKVIFSVAVLVLASSVWTSLA), serve as a signal peptide directing secretion. Disulfide bonds link cysteine 44–cysteine 78, cysteine 51–cysteine 75, and cysteine 64–cysteine 96. Residues 44–98 (CIKNIQLCWILSYFKVSEPICGSNQVTYEGECHLCSGILYEDRTVIKVHDGPCEH) form the Kazal-like domain.

As to expression, expressed in epydiymis, in the cauda, corpus and caput.

The protein resides in the secreted. Probable serine protease inhibitor. In Mus musculus (Mouse), this protein is Serine protease inhibitor Kazal-type 8 (Spink8).